The chain runs to 306 residues: Protein FdhE homolog (306 aa).

This sequence belongs to the FdhE family.

It is found in the cytoplasm. In terms of biological role, necessary for formate dehydrogenase activity. The protein is Protein FdhE homolog of Proteus mirabilis (strain HI4320).